A 168-amino-acid polypeptide reads, in one-letter code: SsrA-binding protein (168 aa).

Positions 1 to 20 are disordered; that stretch reads MAAQSKQAKPSGKQGGKKII.

The protein belongs to the SmpB family.

It localises to the cytoplasm. Functionally, required for rescue of stalled ribosomes mediated by trans-translation. Binds to transfer-messenger RNA (tmRNA), required for stable association of tmRNA with ribosomes. tmRNA and SmpB together mimic tRNA shape, replacing the anticodon stem-loop with SmpB. tmRNA is encoded by the ssrA gene; the 2 termini fold to resemble tRNA(Ala) and it encodes a 'tag peptide', a short internal open reading frame. During trans-translation Ala-aminoacylated tmRNA acts like a tRNA, entering the A-site of stalled ribosomes, displacing the stalled mRNA. The ribosome then switches to translate the ORF on the tmRNA; the nascent peptide is terminated with the 'tag peptide' encoded by the tmRNA and targeted for degradation. The ribosome is freed to recommence translation, which seems to be the essential function of trans-translation. This is SsrA-binding protein from Mycobacterium ulcerans (strain Agy99).